We begin with the raw amino-acid sequence, 380 residues long: MASLLGAYPWTEGLECPALEAELSDGLSPPAVPRPSGDKSSESRIRRPMNAFMVWAKDERKRLAVQNPDLHNAELSKMLGKSWKALTLSQKRPYVDEAERLRLQHMQDYPNYKYRPRRKKQGKRLCKRVDPGFLLSSLSRDQNTLPEKNGIGRGEKEDRGEYSPGATLPGLHSCYREGAAAAPGSVDTYPYGLPTPPEMSPLDALEPEQTFFSSSCQEEHGHPHHLPHLPGPPYSPEFTPSPLHCSHPLGSLALGQSPGVSMMSSVSGCPPSPAYYSHATYHPLHPNLQAHLGQLSPPPEHPGFDTLDQLSQVELLGDMDRNEFDQYLNTPGHPDSAAGVGTLTGHVPLSQGTPTGPTETSLISVLADATATYYNSYSVS.

The interval 24–43 (SDGLSPPAVPRPSGDKSSES) is disordered. The segment at residues 45–113 (IRRPMNAFMV…QHMQDYPNYK (69 aa)) is a DNA-binding region (HMG box). Residues 139–167 (SRDQNTLPEKNGIGRGEKEDRGEYSPGAT) form a disordered region. The Sox C-terminal domain maps to 260-380 (VSMMSSVSGC…ATYYNSYSVS (121 aa)). Positions 323-328 (EFDQYL) are required for beta-catenin-binding.

As to quaternary structure, interacts with CTNNB1/beta-catenin; this interaction may lead to the proteasomal degradation of active CTNNB1 and thus inhibition of Wnt/beta-catenin-stimulated transcription. In terms of tissue distribution, predominantly expressed in ovary, lung and heart. In the ovary, restricted to oocytes (at protein level). Present both in mesenchymal and epithelial cells in some adult tissues, including ear.

It is found in the nucleus. It localises to the cytoplasm. Its function is as follows. Binds to and activates the CDH5 promoter, hence plays a role in the transcriptional regulation of genes expressed in the hemogenic endothelium and blocks further differentiation into blood precursors. May be required for the survival of both hematopoietic and endothelial precursors during specification. May play a role in skeletal myogenesis and up-regulate the expression of muscle markers, such as PAX3/PAX7 and Meox1. Competes with GATA4 for binding and activation of the FGF3 promoter. Represses Wnt/beta-catenin-stimulated transcription. Probably acts by targeting CTNNB1 to proteasomal degradation. Binds the DNA sequence 5'-AACAAT-3'. This chain is Transcription factor SOX-7 (Sox7), found in Mus musculus (Mouse).